Consider the following 87-residue polypeptide: MRTFTLIAILTCAVLVIFHVSAAEELEAQDVIQPEDIFTGVATLEEDRIFECSFSCDIKKNGKPCTGAGEKKCSGGWRCKMNFCVKF.

An N-terminal signal peptide occupies residues 1 to 23 (MRTFTLIAILTCAVLVIFHVSAA). The propeptide occupies 24–51 (EELEAQDVIQPEDIFTGVATLEEDRIFE). 3 cysteine pairs are disulfide-bonded: C52–C65, C56–C79, and C73–C84.

The protein belongs to the neurotoxin 12 (Hwtx-2) family. 03 (juruin) subfamily. In terms of tissue distribution, expressed by the venom gland.

It is found in the secreted. Probable ion channel inhibitor. The protein is U3-theraphotoxin-Cg1c of Chilobrachys guangxiensis (Chinese earth tiger tarantula).